Reading from the N-terminus, the 272-residue chain is 3-methyl-2-oxobutanoate hydroxymethyltransferase (272 aa).

Residues Asp51 and Asp90 each contribute to the Mg(2+) site. 3-methyl-2-oxobutanoate is bound by residues Asp51–Ser52, Asp90, and Lys120. Glu122 provides a ligand contact to Mg(2+). The active-site Proton acceptor is Glu189.

Belongs to the PanB family. As to quaternary structure, homodecamer; pentamer of dimers. It depends on Mg(2+) as a cofactor.

The protein resides in the cytoplasm. It carries out the reaction 3-methyl-2-oxobutanoate + (6R)-5,10-methylene-5,6,7,8-tetrahydrofolate + H2O = 2-dehydropantoate + (6S)-5,6,7,8-tetrahydrofolate. It functions in the pathway cofactor biosynthesis; (R)-pantothenate biosynthesis; (R)-pantoate from 3-methyl-2-oxobutanoate: step 1/2. In terms of biological role, catalyzes the reversible reaction in which hydroxymethyl group from 5,10-methylenetetrahydrofolate is transferred onto alpha-ketoisovalerate to form ketopantoate. The protein is 3-methyl-2-oxobutanoate hydroxymethyltransferase of Syntrophus aciditrophicus (strain SB).